A 101-amino-acid chain; its full sequence is Chaperone modulatory protein CbpM (101 aa).

Belongs to the CbpM family.

Interacts with CbpA and inhibits both the DnaJ-like co-chaperone activity and the DNA binding activity of CbpA. Together with CbpA, modulates the activity of the DnaK chaperone system. Does not inhibit the co-chaperone activity of DnaJ. This Escherichia coli O1:K1 / APEC protein is Chaperone modulatory protein CbpM.